The following is a 135-amino-acid chain: MSEYWYPILGGILLGLSTVMLLLLNGRIAGISGIVGRLLQGGNPAQNIPFVVGLVLGPLLFTVIFDRFPSVTVAATWPTIIVAGLLVGLGTRMGAGCTSGHGIVGIARHSPRSIVATAIFLISGMATATFMGVYQ.

The next 4 helical transmembrane spans lie at 4-24 (YWYP…LLLL), 45-65 (AQNI…TVIF), 71-91 (VTVA…GLGT), and 114-134 (IVAT…MGVY).

The protein belongs to the TsuA/YedE (TC 9.B.102) family.

The protein localises to the cell inner membrane. The protein is Probable transporter PD_1892 of Xylella fastidiosa (strain Temecula1 / ATCC 700964).